The chain runs to 152 residues: Probable methionine-R-sulfoxide reductase B (152 aa).

A MsrB domain is found at 27 to 151; that stretch reads QTEWKSVLPN…NSVCMAFEKK (125 aa). Zn(2+) is bound by residues C66, C69, C116, and C119. Catalysis depends on C140, which acts as the Nucleophile.

The protein belongs to the MsrB Met sulfoxide reductase family. It depends on Zn(2+) as a cofactor.

The enzyme catalyses L-methionyl-[protein] + [thioredoxin]-disulfide + H2O = L-methionyl-(R)-S-oxide-[protein] + [thioredoxin]-dithiol. Functionally, methionine-sulfoxide reductase that specifically reduces methionine (R)-sulfoxide back to methionine. While in many cases, methionine oxidation is the result of random oxidation following oxidative stress, methionine oxidation is also a post-translational modification that takes place on specific residue. The protein is Probable methionine-R-sulfoxide reductase B of Caenorhabditis elegans.